Here is a 159-residue protein sequence, read N- to C-terminus: Neuroglobin-1 (159 aa).

Residues 3–151 (KLTEKEKELI…VVAAMSRGWA (149 aa)) form the Globin domain. Heme b contacts are provided by H66 and H98.

This sequence belongs to the globin family. As to quaternary structure, monomer. Homodimers and homotetramers. Mainly monomeric but also detected as part of homodimers and homotetramers.

The protein resides in the cytoplasm. It localises to the cytosol. The protein localises to the mitochondrion matrix. The enzyme catalyses Fe(III)-heme b-[protein] + nitric oxide + H2O = Fe(II)-heme b-[protein] + nitrite + 2 H(+). In terms of biological role, monomeric globin with a bis-histidyl six-coordinate heme-iron atom through which it can bind dioxygen, carbon monoxide and nitric oxide. Could help transport oxygen and increase its availability to the metabolically active neuronal tissues, though its low quantity in tissues as well as its high affinity for dioxygen, which may limit its oxygen-releasing ability, argue against it. The ferrous/deoxygenated form exhibits a nitrite reductase activity and it could produce nitric oxide which in turn inhibits cellular respiration in response to hypoxia. In its ferrous/deoxygenated state, it may also exhibit GDI (Guanine nucleotide Dissociation Inhibitor) activity toward heterotrimeric G-alpha proteins, thereby regulating signal transduction to facilitate neuroprotective responses in the wake of hypoxia and associated oxidative stress. This is Neuroglobin-1 (ngb1) from Oncorhynchus mykiss (Rainbow trout).